Here is a 59-residue protein sequence, read N- to C-terminus: Large ribosomal subunit protein bL32 (59 aa).

The segment at 1-25 is disordered; sequence MAVQQNKKSPSKRGMHRSHDFLNAA.

The protein belongs to the bacterial ribosomal protein bL32 family.

The polypeptide is Large ribosomal subunit protein bL32 (Paraburkholderia phymatum (strain DSM 17167 / CIP 108236 / LMG 21445 / STM815) (Burkholderia phymatum)).